The sequence spans 1462 residues: Iron-sulfur cluster assembly protein SufD (1462 aa).

Disordered stretches follow at residues 500 to 525 (IDNN…DNPY), 938 to 970 (NQNK…GTEQ), and 1111 to 1153 (NIPS…EKEE). Positions 510–523 (NNNNNNNNNNNCDN) are enriched in low complexity. Over residues 961 to 970 (HIQDEQGTEQ) the composition is skewed to basic and acidic residues. A compositionally biased stretch (low complexity) spans 1111 to 1136 (NIPSNNKQTNSNNNSEYNNEQNNCSN).

It belongs to the iron-sulfur cluster assembly SufBD family. In terms of assembly, component of a complex composed of SufB, SufC and SufD in a stoichiometric ratio of 1:2:1. Interacts with SufB. Interacts with SufC; the interaction enhances the ATPase activity of SufC. Proteolytically cleaved.

The protein localises to the plastid. The protein resides in the apicoplast. It functions in the pathway cofactor biosynthesis; iron-sulfur cluster biosynthesis. Its function is as follows. Participates in the sulfur mobilization (SUF) pathway for iron-sulfur (Fe-S) cluster biogenesis. As part of a complex consisting of SufB-SufC(2)-SufD, involved in assembly of [4Fe-4S] clusters. Enhances the ATPase activity of SufC. This Plasmodium falciparum (isolate 3D7) protein is Iron-sulfur cluster assembly protein SufD.